Here is a 93-residue protein sequence, read N- to C-terminus: NADH-dependent phenylglyoxylate dehydrogenase subunit delta (93 aa).

2 4Fe-4S ferredoxin-type domains span residues 39-68 and 66-93; these read MRPV…EHAA and HAAW…RRSR.

Dimer of heteropentamers composed of an alpha (PadG), a beta (PadI), a gamma (PadE), a delta (PadF) and an epsilon (PadH) subunit. It depends on [4Fe-4S] cluster as a cofactor.

It catalyses the reaction phenylglyoxylate + NAD(+) + CoA = benzoyl-CoA + CO2 + NADH. Its activity is regulated as follows. Activated by magnesium ions and thiamine diphosphate. In terms of biological role, involved in the anaerobic metabolism of phenylalanine and phenylacetate. Catalyzes the oxidative decarboxylation of phenylglyoxylate to benzoyl-CoA and CO(2). It can also react slowly with 2-oxo-3-methylbutanoate and use different electron acceptors such as benzyl viologen, methyl viologen, FAD or FMN, but NAD seems to be the physiological electron acceptor. Also catalyzes an isotope exchange between CO(2) and the carboxyl group which proves partial or complete reversibility of the oxidative decarboxylation reaction. This Aromatoleum evansii (Azoarcus evansii) protein is NADH-dependent phenylglyoxylate dehydrogenase subunit delta (padF).